A 258-amino-acid chain; its full sequence is Phosphate import ATP-binding protein PstB (258 aa).

Residues 5-247 (LDLKDVNIYY…EKIFSNPRQK (243 aa)) form the ABC transporter domain. An ATP-binding site is contributed by 37–44 (GPSGCGKS).

It belongs to the ABC transporter superfamily. Phosphate importer (TC 3.A.1.7) family. The complex is composed of two ATP-binding proteins (PstB), two transmembrane proteins (PstC and PstA) and a solute-binding protein (PstS).

The protein resides in the cell membrane. The enzyme catalyses phosphate(out) + ATP + H2O = ADP + 2 phosphate(in) + H(+). In terms of biological role, part of the ABC transporter complex PstSACB involved in phosphate import. Responsible for energy coupling to the transport system. The polypeptide is Phosphate import ATP-binding protein PstB (Mycolicibacterium smegmatis (Mycobacterium smegmatis)).